A 324-amino-acid chain; its full sequence is CIMIP2 protein GA14893 (324 aa).

This sequence belongs to the CIMIP2 family.

Its subcellular location is the cytoplasm. It is found in the cytoskeleton. The protein resides in the cilium axoneme. Probable microtubule inner protein (MIP) part of the dynein-decorated doublet microtubules (DMTs) in cilium axoneme. The protein is CIMIP2 protein GA14893 of Drosophila pseudoobscura pseudoobscura (Fruit fly).